Here is a 226-residue protein sequence, read N- to C-terminus: Phosphoribosylformylglycinamidine synthase subunit PurQ (226 aa).

The Glutamine amidotransferase type-1 domain maps to 2–225; the sequence is RFGIVVFPGS…MHYLEGGKNN (224 aa). The active-site Nucleophile is the cysteine 86. Residues histidine 194 and glutamate 196 contribute to the active site.

As to quaternary structure, part of the FGAM synthase complex composed of 1 PurL, 1 PurQ and 2 PurS subunits.

It is found in the cytoplasm. It catalyses the reaction N(2)-formyl-N(1)-(5-phospho-beta-D-ribosyl)glycinamide + L-glutamine + ATP + H2O = 2-formamido-N(1)-(5-O-phospho-beta-D-ribosyl)acetamidine + L-glutamate + ADP + phosphate + H(+). The catalysed reaction is L-glutamine + H2O = L-glutamate + NH4(+). The protein operates within purine metabolism; IMP biosynthesis via de novo pathway; 5-amino-1-(5-phospho-D-ribosyl)imidazole from N(2)-formyl-N(1)-(5-phospho-D-ribosyl)glycinamide: step 1/2. Functionally, part of the phosphoribosylformylglycinamidine synthase complex involved in the purines biosynthetic pathway. Catalyzes the ATP-dependent conversion of formylglycinamide ribonucleotide (FGAR) and glutamine to yield formylglycinamidine ribonucleotide (FGAM) and glutamate. The FGAM synthase complex is composed of three subunits. PurQ produces an ammonia molecule by converting glutamine to glutamate. PurL transfers the ammonia molecule to FGAR to form FGAM in an ATP-dependent manner. PurS interacts with PurQ and PurL and is thought to assist in the transfer of the ammonia molecule from PurQ to PurL. The sequence is that of Phosphoribosylformylglycinamidine synthase subunit PurQ from Alkaliphilus metalliredigens (strain QYMF).